A 410-amino-acid chain; its full sequence is Large ribosomal subunit protein uL4 (410 aa).

The protein belongs to the universal ribosomal protein uL4 family.

The protein localises to the cytoplasm. This Tetrahymena thermophila (strain SB210) protein is Large ribosomal subunit protein uL4 (RPL4).